The following is a 244-amino-acid chain: Probable ABC transporter ATP-binding protein p29 (244 aa).

Positions 6 to 241 constitute an ABC transporter domain; it reads LVFDQVSLRY…KLTKQKLMQI (236 aa). 38-45 is a binding site for ATP; the sequence is GKSGVGKT.

This sequence belongs to the ABC transporter superfamily.

Part of a high-affinity transport system. This Mycoplasma pneumoniae (strain ATCC 29342 / M129 / Subtype 1) (Mycoplasmoides pneumoniae) protein is Probable ABC transporter ATP-binding protein p29 (p29).